The primary structure comprises 256 residues: 1-(5-phosphoribosyl)-5-[(5-phosphoribosylamino)methylideneamino] imidazole-4-carboxamide isomerase (256 aa).

Residue Asp8 is the Proton acceptor of the active site. Asp129 (proton donor) is an active-site residue.

The protein belongs to the HisA/HisF family.

Its subcellular location is the cytoplasm. The catalysed reaction is 1-(5-phospho-beta-D-ribosyl)-5-[(5-phospho-beta-D-ribosylamino)methylideneamino]imidazole-4-carboxamide = 5-[(5-phospho-1-deoxy-D-ribulos-1-ylimino)methylamino]-1-(5-phospho-beta-D-ribosyl)imidazole-4-carboxamide. Its pathway is amino-acid biosynthesis; L-histidine biosynthesis; L-histidine from 5-phospho-alpha-D-ribose 1-diphosphate: step 4/9. The sequence is that of 1-(5-phosphoribosyl)-5-[(5-phosphoribosylamino)methylideneamino] imidazole-4-carboxamide isomerase from Synechococcus sp. (strain WH7803).